The sequence spans 182 residues: NADH-quinone oxidoreductase subunit I (182 aa).

2 consecutive 4Fe-4S ferredoxin-type domains span residues 52–82 and 92–121; these read LTRDPDGEERCVACNLCAVACPVGCISLQKA and DFFRINFSRCIFCGLCEEACPTTAIQLTPD. [4Fe-4S] cluster-binding residues include Cys62, Cys65, Cys68, Cys72, Cys101, Cys104, Cys107, and Cys111.

This sequence belongs to the complex I 23 kDa subunit family. As to quaternary structure, NDH-1 is composed of 13 different subunits. Subunits NuoA, H, J, K, L, M, N constitute the membrane sector of the complex. [4Fe-4S] cluster serves as cofactor.

It localises to the cell inner membrane. It carries out the reaction a quinone + NADH + 5 H(+)(in) = a quinol + NAD(+) + 4 H(+)(out). In terms of biological role, NDH-1 shuttles electrons from NADH, via FMN and iron-sulfur (Fe-S) centers, to quinones in the respiratory chain. The immediate electron acceptor for the enzyme in this species is believed to be ubiquinone. Couples the redox reaction to proton translocation (for every two electrons transferred, four hydrogen ions are translocated across the cytoplasmic membrane), and thus conserves the redox energy in a proton gradient. This is NADH-quinone oxidoreductase subunit I from Pseudomonas fluorescens (strain ATCC BAA-477 / NRRL B-23932 / Pf-5).